We begin with the raw amino-acid sequence, 175 residues long: ATP synthase subunit d, mitochondrial (175 aa).

Ser2 carries the post-translational modification N-acetylserine.

The protein belongs to the ATPase d subunit family.

Its subcellular location is the mitochondrion inner membrane. In terms of biological role, mitochondrial membrane ATP synthase (F(1)F(0) ATP synthase or Complex V) produces ATP from ADP in the presence of a proton gradient across the membrane which is generated by electron transport complexes of the respiratory chain. F-type ATPases consist of two structural domains, F(1) - containing the extramembraneous catalytic core, and F(0) - containing the membrane proton channel, linked together by a central stalk and a peripheral stalk. During catalysis, ATP synthesis in the catalytic domain of F(1) is coupled via a rotary mechanism of the central stalk subunits to proton translocation. Part of the complex F(0) domain and the peripheric stalk, which acts as a stator to hold the catalytic alpha(3)beta(3) subcomplex and subunit a/ATP6 static relative to the rotary elements. The sequence is that of ATP synthase subunit d, mitochondrial (atp7) from Schizosaccharomyces pombe (strain 972 / ATCC 24843) (Fission yeast).